The chain runs to 221 residues: Putative transmembrane protein ORF25 (221 aa).

Residues 1-23 form the signal peptide; the sequence is MTLAAKLIVLVYVALCFVNESTS. Residues N19 and N179 are each glycosylated (N-linked (GlcNAc...) asparagine; by host). Over 24–191 the chain is Extracellular; the sequence is QDHSNIYHET…LAKARGVPMS (168 aa). The chain crosses the membrane as a helical span at residues 192-212; it reads VSVISGICAIILVIFPIFITI. The Cytoplasmic portion of the chain corresponds to 213–221; that stretch reads ANLRRVYLH.

Its subcellular location is the host membrane. The sequence is that of Putative transmembrane protein ORF25 from Ostreid herpesvirus 1 (isolate France) (OsHV-1).